Reading from the N-terminus, the 124-residue chain is MSYTPGQPVTAVVQRVEIHKLRQGENLILGFSIGGGIDQDPSQNPFSEDKTDKGIYVTRVSEGGPAEIAGLQIGDKIMQVNGWDMTMVTHDQARKRLTKRSEEVVRLLVTRQSLQKAVQQSMLS.

At serine 2 the chain carries N-acetylserine. The PDZ domain occupies 15-112; the sequence is RVEIHKLRQG…EVVRLLVTRQ (98 aa). Serine 61 carries the post-translational modification Phosphoserine.

Interacts (via its PDZ domain) with GLS2. Interacts (via its PDZ domain) with RTKN (via the C-terminal region); this interaction facilitates Rho-mediated activation of the FOS serum response element (SRE). Interacts (via PDZ domain) with ARHGEF16. Interacts (via PDZ domain) with KCNJ4 (via C-terminus). Competes with LIN7A for KCNJ4 binding. Interacts (via its PDZ domain) with CTNNB1; this interaction inhibits the transcriptional activity of CTNNB1. Interacts with ADGRB2.

The protein resides in the cytoplasm. It localises to the nucleus. Its subcellular location is the cell membrane. May regulate a number of protein-protein interactions by competing for PDZ domain binding sites. Binds CTNNB1 and may thereby act as an inhibitor of the Wnt signaling pathway. Competes with LIN7A for KCNJ4 binding, and thereby promotes KCNJ4 internalization. May play a role in the Rho signaling pathway. In Mus musculus (Mouse), this protein is Tax1-binding protein 3.